The sequence spans 607 residues: Rap1 GTPase-GDP dissociation stimulator 1 (607 aa).

ARM repeat units lie at residues 89–131 and 170–211; these read GLIS…DQAG and DSLQ…NLAE. The prevents binding to prenylated RHOA stretch occupies residues 122-170; the sequence is EGRSAVDQAGGAQIVIDHLRSLCGRTDPASEKLMTVFCGMLMNYSNEND. Lys-230 is subject to N6-acetyllysine. ARM repeat units lie at residues 347–390, 391–431, and 479–519; these read DGNC…NLAI, PVVN…MLID, and SKDV…LIAA.

In terms of assembly, interacts with RABL3. Interacts with RHOT1. As to quaternary structure, interacts with unprenylated RHOA; the interaction is direct. Interacts with RAP1A. Interacts with KRAS. Interacts with RAC1. Interacts with RAP1B. Preferentially interacts with unprenylated GTPases that will become geranylgeranylated. May also interact with prenylated GTPases. Interacts with prenylated RHOA; the interaction is direct and in a 1:1 stoichiometry. Interacts with RAP1A. Interacts with KRAS. Interacts with RAC1. Interacts with RAP1B. Preferentially interacts with prenylated GTPases. Serotonylated on Gln residues by TGM2 in response to hypoxia, leading to its inactivation.

It is found in the cytoplasm. It localises to the cytosol. Its subcellular location is the endoplasmic reticulum. The protein localises to the mitochondrion. The protein resides in the nucleus. Its function is as follows. Acts as a GEF (guanine nucleotide exchange factor) for the Rho family of small GTP-binding proteins (G proteins) that stimulates the dissociation of GDP to enable subsequent binding of GTP. Additionally, appears to chaperone the processing and/or trafficking of small GTPases containing a C-terminal polybasic region independently of GEF activity. Targets include RAP1A/RAP1B, RHOA, RHOB, RHOC, RAC1 and KRAS. Regulates mitochondrial dynamics by controlling RHOT function to promote mitochondrial fission during high calcium conditions. Able to promote the Ca(2+) release from the endoplasmic reticulum via both inositol trisphosphate (Ins3P) and ryanodine sensitive receptors leading to a enhanced mitochondrial Ca(2+) uptake. Functionally, acts as a GEF (guanine nucleotide exchange factor) for unprenylated RHOA. Chaperones the entry and passage of small GTPases through the prenylation pathway. Recognizes the last amino acid in the GTPase C-terminal CAAX motif with a preference for 'Leu' over 'Met', indicating involvement in the geranylgeranylation pathway. May also recognize prenylated GTPases. Acts as a GEF (guanine nucleotide exchange factor) for prenylated RHOA. Acts as a GEF for RHOC. Chaperones the downstream trafficking and/or processing of small newly prenylated GTPases. Escorts RAC1 to the nucleus. This is Rap1 GTPase-GDP dissociation stimulator 1 from Mus musculus (Mouse).